Here is a 293-residue protein sequence, read N- to C-terminus: Ribosomal RNA small subunit methyltransferase H (293 aa).

Residues 34–36 (GGH), Asp54, Leu86, Asp101, and Gln108 contribute to the S-adenosyl-L-methionine site.

Belongs to the methyltransferase superfamily. RsmH family.

The protein localises to the cytoplasm. The catalysed reaction is cytidine(1402) in 16S rRNA + S-adenosyl-L-methionine = N(4)-methylcytidine(1402) in 16S rRNA + S-adenosyl-L-homocysteine + H(+). In terms of biological role, specifically methylates the N4 position of cytidine in position 1402 (C1402) of 16S rRNA. This is Ribosomal RNA small subunit methyltransferase H from Elusimicrobium minutum (strain Pei191).